A 404-amino-acid polypeptide reads, in one-letter code: Cysteine desulfurase IscS (404 aa).

Residues 75-76 (AT), Asn155, Gln183, and 203-205 (SAH) contribute to the pyridoxal 5'-phosphate site. Lys206 is subject to N6-(pyridoxal phosphate)lysine. Thr243 serves as a coordination point for pyridoxal 5'-phosphate. Cys328 acts as the Cysteine persulfide intermediate in catalysis. [2Fe-2S] cluster is bound at residue Cys328.

The protein belongs to the class-V pyridoxal-phosphate-dependent aminotransferase family. NifS/IscS subfamily. Homodimer. Forms a heterotetramer with IscU, interacts with other sulfur acceptors. The cofactor is pyridoxal 5'-phosphate.

It is found in the cytoplasm. The catalysed reaction is (sulfur carrier)-H + L-cysteine = (sulfur carrier)-SH + L-alanine. It functions in the pathway cofactor biosynthesis; iron-sulfur cluster biosynthesis. In terms of biological role, master enzyme that delivers sulfur to a number of partners involved in Fe-S cluster assembly, tRNA modification or cofactor biosynthesis. Catalyzes the removal of elemental sulfur atoms from cysteine to produce alanine. Functions as a sulfur delivery protein for Fe-S cluster synthesis onto IscU, an Fe-S scaffold assembly protein, as well as other S acceptor proteins. This is Cysteine desulfurase IscS from Pseudomonas fluorescens (strain SBW25).